A 503-amino-acid polypeptide reads, in one-letter code: Transcription termination/antitermination protein NusA (503 aa).

In terms of domain architecture, S1 motif spans 140–206 (GELVIGVVKR…RGPQLLVSRT (67 aa)). The 67-residue stretch at 308-374 (SHTMDIAVNK…FMEKLDVDEE (67 aa)) folds into the KH domain.

The protein belongs to the NusA family. Monomer. Binds directly to the core enzyme of the DNA-dependent RNA polymerase and to nascent RNA.

It localises to the cytoplasm. In terms of biological role, participates in both transcription termination and antitermination. This Coxiella burnetii (strain RSA 493 / Nine Mile phase I) protein is Transcription termination/antitermination protein NusA.